Reading from the N-terminus, the 112-residue chain is Nucleoid-associated protein FTW_0607 (112 aa).

The disordered stretch occupies residues 1-27 (MNFDMSKLMQQAQKMQEQMKKAQQERE). The segment covering 17–27 (EQMKKAQQERE) has biased composition (basic and acidic residues).

Belongs to the YbaB/EbfC family. Homodimer.

The protein resides in the cytoplasm. It localises to the nucleoid. Binds to DNA and alters its conformation. May be involved in regulation of gene expression, nucleoid organization and DNA protection. In Francisella tularensis subsp. tularensis (strain WY96-3418), this protein is Nucleoid-associated protein FTW_0607.